The primary structure comprises 221 residues: 7-cyano-7-deazaguanine synthase (221 aa).

An ATP-binding site is contributed by 7–17; sequence LSGGMDSSTLA. Zn(2+)-binding residues include C187, C195, C198, and C201.

The protein belongs to the QueC family. It depends on Zn(2+) as a cofactor.

The catalysed reaction is 7-carboxy-7-deazaguanine + NH4(+) + ATP = 7-cyano-7-deazaguanine + ADP + phosphate + H2O + H(+). It functions in the pathway purine metabolism; 7-cyano-7-deazaguanine biosynthesis. Functionally, catalyzes the ATP-dependent conversion of 7-carboxy-7-deazaguanine (CDG) to 7-cyano-7-deazaguanine (preQ(0)). In Methanosphaerula palustris (strain ATCC BAA-1556 / DSM 19958 / E1-9c), this protein is 7-cyano-7-deazaguanine synthase.